Here is a 466-residue protein sequence, read N- to C-terminus: 3-isopropylmalate dehydratase large subunit (466 aa).

Residues Cys347, Cys407, and Cys410 each coordinate [4Fe-4S] cluster.

This sequence belongs to the aconitase/IPM isomerase family. LeuC type 1 subfamily. As to quaternary structure, heterodimer of LeuC and LeuD. Requires [4Fe-4S] cluster as cofactor.

The enzyme catalyses (2R,3S)-3-isopropylmalate = (2S)-2-isopropylmalate. It participates in amino-acid biosynthesis; L-leucine biosynthesis; L-leucine from 3-methyl-2-oxobutanoate: step 2/4. Functionally, catalyzes the isomerization between 2-isopropylmalate and 3-isopropylmalate, via the formation of 2-isopropylmaleate. The chain is 3-isopropylmalate dehydratase large subunit from Pectobacterium atrosepticum (strain SCRI 1043 / ATCC BAA-672) (Erwinia carotovora subsp. atroseptica).